We begin with the raw amino-acid sequence, 670 residues long: Sodium/glucose cotransporter 2 (670 aa).

At 1-20 the chain is on the extracellular side; it reads MEGHVEEGSELGEQKVLIDN. A helical transmembrane segment spans residues 21–42; sequence PADILVIAAYFLLVIGVGLWSM. The Cytoplasmic portion of the chain corresponds to 43-61; that stretch reads FRTNRGTVGGYFLAGRSMV. Residues 62–83 form a helical membrane-spanning segment; that stretch reads WWPVGASLFASNIGSGHFVGLA. The Na(+) site is built by Ala71 and Ile74. Residues 84–91 lie on the Extracellular side of the membrane; it reads GTGAASGL. The chain crosses the membrane as a helical span at residues 92 to 112; it reads AVAGFEWNALFVVLLLGWLFV. The Cytoplasmic segment spans residues 113-134; it reads PVYLTAGVITMPQYLRKRFGGR. The chain crosses the membrane as a helical span at residues 135–164; sequence RIRLYLSVLSLFLYIFTKISVDMFSGAVFI. The Extracellular portion of the chain corresponds to 165-171; sequence QQALGWN. A run of 2 helical transmembrane segments spans residues 172 to 193 and 194 to 215; these read IYAS…GGLA and ALMY…ILTG. The Extracellular segment spans residues 216-273; sequence YAFHEVGGYSGLFDKYLGAVTSLTVSKDPAVGNISSTCYQPRPDSYHLLRDPVTGGLP. N-linked (GlcNAc...) asparagine glycosylation occurs at Asn248. 4 disulfides stabilise this stretch: Cys253–Cys509, Cys343–Cys349, Cys353–Cys359, and Cys515–Cys520. A helical transmembrane segment spans residues 274-293; the sequence is WPALLLGLTIVSGWHWCSDQ. At 294-307 the chain is on the cytoplasmic side; sequence VIVQRCLAGKNLTH. Residues 308–329 traverse the membrane as a helical segment; the sequence is IKAGCILCGYLKLMPMFLMVMP. Residues 330–373 are Extracellular-facing; it reads GMISRILYPDEVACVVPEVCKRVCGTEVGCSNIAYPRLVVKLMP. A helical membrane pass occupies residues 374–404; that stretch reads NGLRGLMLAVMLAALMSSLASIFNSSSTLFT. Na(+) is bound by residues Ala387, Ser390, and Ser391. Over 405-422 the chain is Cytoplasmic; it reads MDIYTRLRPRAGDRELLL. A helical transmembrane segment spans residues 423 to 444; that stretch reads VGRLWVVFIVAVSVAWLPVVQA. At 445–449 the chain is on the extracellular side; that stretch reads AQGGQ. Residues 450-475 traverse the membrane as a helical segment; it reads LFDYIQSVSSYLAPPVSAVFVLALFV. Residues 476–480 are Cytoplasmic-facing; it reads PRVNE. A helical transmembrane segment spans residues 481-503; sequence KGAFWGLIGGLLMGLARLIPEFF. Residues 504 to 521 lie on the Extracellular side of the membrane; the sequence is FGTGSCVRPSACPAIFCR. A helical membrane pass occupies residues 522–545; it reads VHYLYFAIILFFCSGFLTLAISRC. Topologically, residues 546 to 649 are cytoplasmic; the sequence is TAPIPQKHLH…DISEDPSWAR (104 aa). A helical membrane pass occupies residues 650–668; the sequence is VVNLNALLMMTVAVFLWGF. The Extracellular portion of the chain corresponds to 669–670; sequence YA.

The protein belongs to the sodium:solute symporter (SSF) (TC 2.A.21) family. Forms a heterodimer (via TM13) with PDZK1IP1 (via N-terminal transmembrane helix); this interaction enhances SLC5A2 transporter activity. Post-translationally, glycosylated at a single site. Kidney, in proximal tubule S1 segments.

The protein resides in the apical cell membrane. It catalyses the reaction D-glucose(out) + Na(+)(out) = D-glucose(in) + Na(+)(in). Enhanced by the interaction with PDZK1IP1/MAP17. Its function is as follows. Electrogenic Na(+)-coupled sugar symporter that actively transports D-glucose at the plasma membrane, with a Na(+) to sugar coupling ratio of 1:1. Transporter activity is driven by a transmembrane Na(+) electrochemical gradient set by the Na(+)/K(+) pump. Unlike SLC5A1/SGLT1, requires the auxiliary protein PDZK1IP1/MAP17 for full transporter activity. Has a primary role in D-glucose reabsorption from glomerular filtrate across the brush border of the early proximal tubules of the kidney. This Rattus norvegicus (Rat) protein is Sodium/glucose cotransporter 2 (Slc5a2).